Reading from the N-terminus, the 497-residue chain is Cytochrome P450 2D19 (497 aa).

C443 contributes to the heme binding site.

The protein belongs to the cytochrome P450 family. Heme is required as a cofactor.

The protein resides in the endoplasmic reticulum membrane. Its subcellular location is the microsome membrane. It catalyses the reaction an organic molecule + reduced [NADPH--hemoprotein reductase] + O2 = an alcohol + oxidized [NADPH--hemoprotein reductase] + H2O + H(+). Functionally, responsible for the metabolism of many drugs and environmental chemicals that it oxidizes. The sequence is that of Cytochrome P450 2D19 (CYP2D19) from Callithrix jacchus (White-tufted-ear marmoset).